A 412-amino-acid polypeptide reads, in one-letter code: Serine--tRNA ligase (412 aa).

Thr228–Glu230 serves as a coordination point for L-serine. Residue Arg259–Glu261 participates in ATP binding. Glu282 contacts L-serine. Glu346–Ser349 serves as a coordination point for ATP. L-serine is bound at residue Ser380.

It belongs to the class-II aminoacyl-tRNA synthetase family. Type-1 seryl-tRNA synthetase subfamily. In terms of assembly, homodimer. The tRNA molecule binds across the dimer.

It localises to the cytoplasm. It carries out the reaction tRNA(Ser) + L-serine + ATP = L-seryl-tRNA(Ser) + AMP + diphosphate + H(+). The enzyme catalyses tRNA(Sec) + L-serine + ATP = L-seryl-tRNA(Sec) + AMP + diphosphate + H(+). Its pathway is aminoacyl-tRNA biosynthesis; selenocysteinyl-tRNA(Sec) biosynthesis; L-seryl-tRNA(Sec) from L-serine and tRNA(Sec): step 1/1. In terms of biological role, catalyzes the attachment of serine to tRNA(Ser). Is also able to aminoacylate tRNA(Sec) with serine, to form the misacylated tRNA L-seryl-tRNA(Sec), which will be further converted into selenocysteinyl-tRNA(Sec). This chain is Serine--tRNA ligase, found in Aliarcobacter butzleri (strain RM4018) (Arcobacter butzleri).